The following is a 335-amino-acid chain: CTD kinase subunit beta (335 aa).

Cyclin N-terminal domains follow at residues 26-151 (ILST…CFDF) and 158-241 (NYMV…LYMH). Residues 269 to 293 (KNSGRPQKPPQIDPHSSSLADEYRE) are disordered.

The protein belongs to the cyclin family. In terms of assembly, CTDK-I consists of three subunits, ctk1/lsk1, ctk2/lsc1 and ctk3 (also called alpha, beta and gamma). Interacts with ctk1/lsk1. This interaction is dependent on ctk1/lsk1 kinase activity.

It is found in the cytoplasm. The protein resides in the nucleus. Functionally, cyclin subunit of the CTDK-I complex, which hyperphosphorylates the C-terminal heptapeptide repeat domain (CTD) of the largest RNA polymerase II subunit. As part of the CTDK-I complex, involved in RNA polymerase II transcriptional elongation and pre-mRNA 3'-end processing. Together with ctk3, required for ctk1/lsk1 CTD kinase activation. Together with ctk1/lsk1, required for the regulation of cytokinesis by phosphorylating 'Ser-2' residues found in the heptad repeats of the CTD. This is CTD kinase subunit beta (lsc1) from Schizosaccharomyces pombe (strain 972 / ATCC 24843) (Fission yeast).